The sequence spans 102 residues: Urease subunit beta (102 aa).

It belongs to the urease beta subunit family. As to quaternary structure, heterotrimer of UreA (gamma), UreB (beta) and UreC (alpha) subunits. Three heterotrimers associate to form the active enzyme.

It is found in the cytoplasm. It catalyses the reaction urea + 2 H2O + H(+) = hydrogencarbonate + 2 NH4(+). The protein operates within nitrogen metabolism; urea degradation; CO(2) and NH(3) from urea (urease route): step 1/1. The sequence is that of Urease subunit beta from Bordetella pertussis (strain Tohama I / ATCC BAA-589 / NCTC 13251).